The primary structure comprises 306 residues: D-alanine--D-alanine ligase (306 aa).

An ATP-grasp domain is found at 101-303 (KQVWQAVGLP…FSQLVVKILE (203 aa)). 134–189 (FTHLGLPLIVKPSREGSSVGMSKVNTLSDLPAALEEAFRHDDDVLVEKWLSGPEYT) provides a ligand contact to ATP. 3 residues coordinate Mg(2+): Asp257, Glu270, and Asn272.

The protein belongs to the D-alanine--D-alanine ligase family. Mg(2+) serves as cofactor. Requires Mn(2+) as cofactor.

It localises to the cytoplasm. It catalyses the reaction 2 D-alanine + ATP = D-alanyl-D-alanine + ADP + phosphate + H(+). The protein operates within cell wall biogenesis; peptidoglycan biosynthesis. Functionally, cell wall formation. The polypeptide is D-alanine--D-alanine ligase (Pectobacterium atrosepticum (strain SCRI 1043 / ATCC BAA-672) (Erwinia carotovora subsp. atroseptica)).